Consider the following 612-residue polypeptide: Dihydroxy-acid dehydratase (612 aa).

Aspartate 81 contributes to the Mg(2+) binding site. Position 122 (cysteine 122) interacts with [2Fe-2S] cluster. Mg(2+) is bound by residues aspartate 123 and lysine 124. At lysine 124 the chain carries N6-carboxylysine. [2Fe-2S] cluster is bound at residue cysteine 195. Glutamate 491 contributes to the Mg(2+) binding site. Catalysis depends on serine 517, which acts as the Proton acceptor.

Belongs to the IlvD/Edd family. In terms of assembly, homodimer. It depends on [2Fe-2S] cluster as a cofactor. Mg(2+) serves as cofactor.

The enzyme catalyses (2R)-2,3-dihydroxy-3-methylbutanoate = 3-methyl-2-oxobutanoate + H2O. It catalyses the reaction (2R,3R)-2,3-dihydroxy-3-methylpentanoate = (S)-3-methyl-2-oxopentanoate + H2O. It functions in the pathway amino-acid biosynthesis; L-isoleucine biosynthesis; L-isoleucine from 2-oxobutanoate: step 3/4. The protein operates within amino-acid biosynthesis; L-valine biosynthesis; L-valine from pyruvate: step 3/4. In terms of biological role, functions in the biosynthesis of branched-chain amino acids. Catalyzes the dehydration of (2R,3R)-2,3-dihydroxy-3-methylpentanoate (2,3-dihydroxy-3-methylvalerate) into 2-oxo-3-methylpentanoate (2-oxo-3-methylvalerate) and of (2R)-2,3-dihydroxy-3-methylbutanoate (2,3-dihydroxyisovalerate) into 2-oxo-3-methylbutanoate (2-oxoisovalerate), the penultimate precursor to L-isoleucine and L-valine, respectively. This is Dihydroxy-acid dehydratase from Bartonella henselae (strain ATCC 49882 / DSM 28221 / CCUG 30454 / Houston 1) (Rochalimaea henselae).